The chain runs to 148 residues: Receptor activity-modifying protein 1 (148 aa).

Residues 1–26 form the signal peptide; the sequence is MVRVLRGLPWRGLWLLLAHQLFLVTA. Disulfide bonds link C27/C82, C40/C72, and C57/C104. Over 27 to 118 the chain is Extracellular; that stretch reads CQDAHYGTLM…RALGDPPSTI (92 aa). A helical membrane pass occupies residues 119–140; it reads LCPFVVLPITVTLLVTALVVWR. At 141–148 the chain is on the cytoplasmic side; the sequence is SKRAESIV.

Belongs to the RAMP family. As to quaternary structure, heterodimer of CALCRL and RAMP1; the interaction induces allosteric modulation of CALCRL function and CGRP1/CALCA and CGRP2/CALCB ligand specificity. Heterodimer of CALCR and RAMP1; interaction forms the AMYR1 receptor complex for amylin/IAPP and CGRP1/CALCA ligands.

It localises to the cell membrane. Its function is as follows. Accessory protein that interacts with and modulates the function of G-protein coupled receptors including calcitonin gene-related peptide type 1 receptor (CALCRL) and calcitonin receptor (CALCR). Required for the transport of CALCRL to the plasma membrane. Together with CALCRL, form the receptor complex for the calcitonin gene-related peptides CGRP1/CALCA and CGRP2/CALCB. Together with CALCR, form the AMYR1 receptor complex for amylin/IAPP and CGRP1/CALCA. This Cavia porcellus (Guinea pig) protein is Receptor activity-modifying protein 1 (RAMP1).